The primary structure comprises 429 residues: Probable M18 family aminopeptidase 2 (429 aa).

Residues histidine 82, histidine 156, and histidine 401 each coordinate Zn(2+).

It belongs to the peptidase M18 family. The cofactor is Zn(2+).

This Pseudomonas paraeruginosa (strain DSM 24068 / PA7) (Pseudomonas aeruginosa (strain PA7)) protein is Probable M18 family aminopeptidase 2.